The primary structure comprises 312 residues: Undecaprenyl-diphosphatase (312 aa).

7 helical membrane-spanning segments follow: residues 74-94 (GVAFTAVIQLGSIVSIVWYFW), 122-142 (VSIGLGTIPIVFFGLLIKVFI), 154-174 (VAIAIASIIMALLLVIAERIG), 183-203 (LDIRDGIVIGLAQVLALIPGV), 226-246 (FSFLLGLPAITLAGLVELKTL), 254-274 (VGLVATLTGVFSAIIFSYIAI), and 288-308 (IFIWYRLAFGILILIGIISGV).

The protein belongs to the UppP family.

It is found in the cell inner membrane. The catalysed reaction is di-trans,octa-cis-undecaprenyl diphosphate + H2O = di-trans,octa-cis-undecaprenyl phosphate + phosphate + H(+). Its function is as follows. Catalyzes the dephosphorylation of undecaprenyl diphosphate (UPP). Confers resistance to bacitracin. The chain is Undecaprenyl-diphosphatase from Trichodesmium erythraeum (strain IMS101).